The following is a 159-amino-acid chain: Transcription elongation factor GreA (159 aa).

Residues 44–75 (SENAEYDAAREQQSQTEARIADLESKLSSATI) are a coiled coil.

Belongs to the GreA/GreB family.

In terms of biological role, necessary for efficient RNA polymerase transcription elongation past template-encoded arresting sites. The arresting sites in DNA have the property of trapping a certain fraction of elongating RNA polymerases that pass through, resulting in locked ternary complexes. Cleavage of the nascent transcript by cleavage factors such as GreA or GreB allows the resumption of elongation from the new 3'terminus. GreA releases sequences of 2 to 3 nucleotides. This chain is Transcription elongation factor GreA, found in Chlorobium phaeovibrioides (strain DSM 265 / 1930) (Prosthecochloris vibrioformis (strain DSM 265)).